The chain runs to 51 residues: Magnetosome protein Mms5 (51 aa).

Over Met-1–Gly-12 the chain is Lumenal. An LG region region spans residues Leu-9–Gly-16. Residues Leu-13–Ala-33 traverse the membrane as a helical segment. Over Leu-34–Val-51 the chain is Cytoplasmic.

It belongs to the magnetosome MamD/Mms5 family. Post-translationally, seen in gels as a band of about 5 kDa, with an N-terminus that corresponds to residue 8, suggesting it may undergo N-terminal cleavage.

It localises to the magnetosome membrane. Its function is as follows. Might be involved in magnetite crystal growth. This chain is Magnetosome protein Mms5, found in Paramagnetospirillum magneticum (strain ATCC 700264 / AMB-1) (Magnetospirillum magneticum).